A 682-amino-acid chain; its full sequence is Heat shock 70 kDa protein 9, mitochondrial (682 aa).

A mitochondrion-targeting transit peptide spans 1-46 (MASVALLRSFRRREVQMASVSAFKSVSANGKNSMFGKLGYLARPFC). Positions 640–682 (SKIGEHMSKGSGSSGSDGSSGEGTSGTEQTPEAEFEEASGSRK) are disordered. Positions 651 to 663 (GSSGSDGSSGEGT) are enriched in gly residues.

This sequence belongs to the heat shock protein 70 (TC 1.A.33) family. DnaK subfamily. In terms of assembly, interacts with HSCB.

The protein resides in the mitochondrion. It localises to the cytoplasm. Its subcellular location is the cytosol. Its function is as follows. Chaperone involved in the maturation of iron-sulfur [Fe-S] cluster-containing proteins. Has a low intrinsic ATPase activity which is markedly stimulated by HSCB and ISU1. In cooperation with other chaperones, Hsp70s are key components that facilitate folding of de novo synthesized proteins, assist translocation of precursor proteins into organelles, and are responsible for degradation of damaged protein under stress conditions. The sequence is that of Heat shock 70 kDa protein 9, mitochondrial from Arabidopsis thaliana (Mouse-ear cress).